A 157-amino-acid chain; its full sequence is Small ribosomal subunit protein uS7 (157 aa).

This sequence belongs to the universal ribosomal protein uS7 family. As to quaternary structure, part of the 30S ribosomal subunit. Contacts proteins S9 and S11.

Its function is as follows. One of the primary rRNA binding proteins, it binds directly to 16S rRNA where it nucleates assembly of the head domain of the 30S subunit. Is located at the subunit interface close to the decoding center, probably blocks exit of the E-site tRNA. The sequence is that of Small ribosomal subunit protein uS7 from Roseiflexus castenholzii (strain DSM 13941 / HLO8).